Reading from the N-terminus, the 201-residue chain is MSVKARILVLYYSMYGHIETMARAVAEGASKVDGAEVVVKRVPETMPPQLFEKAGGKTQTAPVATPQELADYDAIIFGTPTRFGNMSGQMRTFLDQTGGLWASGALYGKLASVFSSTGTGGGQEQTITSTWTTLAHHGMVIVPIGYAAQELFDVSQVRGGTPYGATTIAGGDGSRQPSQEELSIARYQGEYVAGLAVKLNG.

The 186-residue stretch at 7 to 192 folds into the Flavodoxin-like domain; that stretch reads ILVLYYSMYG…SIARYQGEYV (186 aa). Residues 13–18 and 81–83 contribute to the FMN site; these read SMYGHI and TRF. Tyr15 contacts NAD(+). Trp101 is a substrate binding site. Residues 116 to 121 and His136 each bind FMN; that span reads STGTGG.

It belongs to the WrbA family. It depends on FMN as a cofactor.

The catalysed reaction is a quinone + NADH + H(+) = a quinol + NAD(+). The enzyme catalyses a quinone + NADPH + H(+) = a quinol + NADP(+). This chain is NAD(P)H dehydrogenase (quinone), found in Shigella sonnei (strain Ss046).